The chain runs to 219 residues: Thiamine-phosphate synthase (219 aa).

4-amino-2-methyl-5-(diphosphooxymethyl)pyrimidine-binding positions include 44–48 (QFREK) and Asn79. The Mg(2+) site is built by Asp80 and Asp99. Position 117 (Ser117) interacts with 4-amino-2-methyl-5-(diphosphooxymethyl)pyrimidine. 143–145 (TST) serves as a coordination point for 2-[(2R,5Z)-2-carboxy-4-methylthiazol-5(2H)-ylidene]ethyl phosphate. A 4-amino-2-methyl-5-(diphosphooxymethyl)pyrimidine-binding site is contributed by Lys146. Residues Gly175 and 195-196 (IS) each bind 2-[(2R,5Z)-2-carboxy-4-methylthiazol-5(2H)-ylidene]ethyl phosphate.

This sequence belongs to the thiamine-phosphate synthase family. The cofactor is Mg(2+).

It carries out the reaction 2-[(2R,5Z)-2-carboxy-4-methylthiazol-5(2H)-ylidene]ethyl phosphate + 4-amino-2-methyl-5-(diphosphooxymethyl)pyrimidine + 2 H(+) = thiamine phosphate + CO2 + diphosphate. The enzyme catalyses 2-(2-carboxy-4-methylthiazol-5-yl)ethyl phosphate + 4-amino-2-methyl-5-(diphosphooxymethyl)pyrimidine + 2 H(+) = thiamine phosphate + CO2 + diphosphate. The catalysed reaction is 4-methyl-5-(2-phosphooxyethyl)-thiazole + 4-amino-2-methyl-5-(diphosphooxymethyl)pyrimidine + H(+) = thiamine phosphate + diphosphate. The protein operates within cofactor biosynthesis; thiamine diphosphate biosynthesis; thiamine phosphate from 4-amino-2-methyl-5-diphosphomethylpyrimidine and 4-methyl-5-(2-phosphoethyl)-thiazole: step 1/1. Functionally, condenses 4-methyl-5-(beta-hydroxyethyl)thiazole monophosphate (THZ-P) and 2-methyl-4-amino-5-hydroxymethyl pyrimidine pyrophosphate (HMP-PP) to form thiamine monophosphate (TMP). The protein is Thiamine-phosphate synthase of Bacillus cereus (strain AH820).